The chain runs to 164 residues: NADH-quinone oxidoreductase subunit I 1 (164 aa).

4Fe-4S ferredoxin-type domains lie at 54–84 (LRRYPNGEERCIACKLCEAICPAQAITIEAG) and 95–124 (VRYDIDMVKCIYCGFCQEACPVDAIVEGPN). Residues C64, C67, C70, C74, C104, C107, C110, and C114 each contribute to the [4Fe-4S] cluster site.

Belongs to the complex I 23 kDa subunit family. In terms of assembly, NDH-1 is composed of 14 different subunits. Subunits NuoA, H, J, K, L, M, N constitute the membrane sector of the complex. Requires [4Fe-4S] cluster as cofactor.

The protein resides in the cell inner membrane. The catalysed reaction is a quinone + NADH + 5 H(+)(in) = a quinol + NAD(+) + 4 H(+)(out). Its function is as follows. NDH-1 shuttles electrons from NADH, via FMN and iron-sulfur (Fe-S) centers, to quinones in the respiratory chain. The immediate electron acceptor for the enzyme in this species is believed to be ubiquinone. Couples the redox reaction to proton translocation (for every two electrons transferred, four hydrogen ions are translocated across the cytoplasmic membrane), and thus conserves the redox energy in a proton gradient. The sequence is that of NADH-quinone oxidoreductase subunit I 1 from Rhizobium meliloti (strain 1021) (Ensifer meliloti).